Consider the following 260-residue polypeptide: Thiazole synthase (260 aa).

K96 acts as the Schiff-base intermediate with DXP in catalysis. 1-deoxy-D-xylulose 5-phosphate contacts are provided by residues G157, 184 to 185 (AG), and 206 to 207 (NT).

The protein belongs to the ThiG family. Homotetramer. Forms heterodimers with either ThiH or ThiS.

Its subcellular location is the cytoplasm. The enzyme catalyses [ThiS sulfur-carrier protein]-C-terminal-Gly-aminoethanethioate + 2-iminoacetate + 1-deoxy-D-xylulose 5-phosphate = [ThiS sulfur-carrier protein]-C-terminal Gly-Gly + 2-[(2R,5Z)-2-carboxy-4-methylthiazol-5(2H)-ylidene]ethyl phosphate + 2 H2O + H(+). It functions in the pathway cofactor biosynthesis; thiamine diphosphate biosynthesis. Its function is as follows. Catalyzes the rearrangement of 1-deoxy-D-xylulose 5-phosphate (DXP) to produce the thiazole phosphate moiety of thiamine. Sulfur is provided by the thiocarboxylate moiety of the carrier protein ThiS. In vitro, sulfur can be provided by H(2)S. The protein is Thiazole synthase of Nitrobacter hamburgensis (strain DSM 10229 / NCIMB 13809 / X14).